Consider the following 869-residue polypeptide: Probable beta-glucosidase F (869 aa).

Residues 1–19 form the signal peptide; it reads MRVLSAIALVASLASSALS. Residues Asn-77 and Asn-261 are each glycosylated (N-linked (GlcNAc...) asparagine). Residue Asp-289 is part of the active site. Residues Asn-332, Asn-364, Asn-399, and Asn-478 are each glycosylated (N-linked (GlcNAc...) asparagine). The disordered stretch occupies residues 677–697; that stretch reads STYPPTRPPKGPTPTYPTAIP. Pro residues predominate over residues 681–691; the sequence is PTRPPKGPTPT. Asn-728 carries N-linked (GlcNAc...) asparagine glycosylation.

It belongs to the glycosyl hydrolase 3 family.

Its subcellular location is the secreted. It carries out the reaction Hydrolysis of terminal, non-reducing beta-D-glucosyl residues with release of beta-D-glucose.. It participates in glycan metabolism; cellulose degradation. In terms of biological role, beta-glucosidases are one of a number of cellulolytic enzymes involved in the degradation of cellulosic biomass. Catalyzes the last step releasing glucose from the inhibitory cellobiose. The protein is Probable beta-glucosidase F (bglF) of Aspergillus fumigatus (strain CBS 144.89 / FGSC A1163 / CEA10) (Neosartorya fumigata).